The following is a 290-amino-acid chain: Glutaredoxin domain-containing cysteine-rich protein 1 (290 aa).

In terms of domain architecture, Glutaredoxin spans 127–234 (LQQPSADLEF…DLLTKIERVQ (108 aa)).

It belongs to the GRXCR1 family. In terms of tissue distribution, in the inner ear, expressed predominantly in sensory hair cells and their stereocilia bundles with higher levels in outer hair cells (OHC) at P1 and in inner hair cells (IHC) at P5. At P1, expression is prominent in each row of stereocilia within bundles including immature shorter stereocilia. Expression is also observed in apical microvilli of sensory cells at P1 and in kinocilia at P1 and P5. In the adult, expression is localized throughout the length of the stereocilia of both OHC and IHC (at protein level).

The protein resides in the cell projection. Its subcellular location is the stereocilium. It localises to the microvillus. It is found in the kinocilium. Its function is as follows. May play a role in actin filament architecture in developing stereocilia of sensory cells. In Mus musculus (Mouse), this protein is Glutaredoxin domain-containing cysteine-rich protein 1 (Grxcr1).